A 588-amino-acid polypeptide reads, in one-letter code: Transmembrane protein 201 homolog (588 aa).

Residues Met-1–Glu-212 are Nuclear-facing. The helical transmembrane segment at Ala-213–Leu-233 threads the bilayer. At Gln-234–Glu-254 the chain is on the perinuclear space side. A helical membrane pass occupies residues Val-255–Phe-275. The Nuclear segment spans residues Asn-276–Arg-280. The helical transmembrane segment at Val-281–Thr-301 threads the bilayer. Residues Ser-302–Asp-309 are Perinuclear space-facing. Residues Val-310–Leu-330 form a helical membrane-spanning segment. The Nuclear portion of the chain corresponds to Leu-331–Gly-564. The interval Arg-378–Pro-457 is disordered. Over residues Pro-384–Pro-396 the composition is skewed to low complexity. 2 stretches are compositionally biased toward polar residues: residues Asn-418–Val-430 and Met-441–Ser-452. The chain crosses the membrane as a helical span at residues Ile-565–Phe-585. The Perinuclear space portion of the chain corresponds to Thr-586 to Asn-588.

Belongs to the TMEM201 family.

The protein resides in the nucleus inner membrane. Plays a role in nuclear migration in hypodermal cells. The protein is Transmembrane protein 201 homolog of Caenorhabditis elegans.